A 157-amino-acid chain; its full sequence is Ribosome maturation factor RimP (157 aa).

Belongs to the RimP family.

It localises to the cytoplasm. In terms of biological role, required for maturation of 30S ribosomal subunits. In Enterococcus faecalis (strain ATCC 700802 / V583), this protein is Ribosome maturation factor RimP.